Reading from the N-terminus, the 185-residue chain is UPF0669 protein C6orf120 homolog (185 aa).

The N-terminal stretch at 1-23 (MATPWRCALLMILASQVVILVKC) is a signal peptide. Asn-47 carries an N-linked (GlcNAc...) asparagine glycan.

The protein belongs to the UPF0669 family.

It is found in the secreted. In terms of biological role, may be involved in induction of apoptosis in CD4(+) T-cells, but not CD8(+) T-cells or hepatocytes. This chain is UPF0669 protein C6orf120 homolog, found in Rattus norvegicus (Rat).